A 103-amino-acid chain; its full sequence is Putative double-stranded DNA mimic protein HD_0986 (103 aa).

The protein belongs to the putative dsDNA mimic protein family.

Its function is as follows. May act as a double-stranded DNA (dsDNA) mimic. Probably regulates the activity of a dsDNA-binding protein. The sequence is that of Putative double-stranded DNA mimic protein HD_0986 from Haemophilus ducreyi (strain 35000HP / ATCC 700724).